A 432-amino-acid polypeptide reads, in one-letter code: Phosphomethylpyrimidine synthase (432 aa).

Substrate is bound by residues Asn-66, Met-95, Tyr-124, His-163, 185–187, 226–229, and Glu-265; these read SRG and DGLR. Residue His-269 participates in Zn(2+) binding. Tyr-292 lines the substrate pocket. His-333 is a Zn(2+) binding site. [4Fe-4S] cluster-binding residues include Cys-409, Cys-412, and Cys-416.

It belongs to the ThiC family. [4Fe-4S] cluster is required as a cofactor.

It carries out the reaction 5-amino-1-(5-phospho-beta-D-ribosyl)imidazole + S-adenosyl-L-methionine = 4-amino-2-methyl-5-(phosphooxymethyl)pyrimidine + CO + 5'-deoxyadenosine + formate + L-methionine + 3 H(+). The protein operates within cofactor biosynthesis; thiamine diphosphate biosynthesis. Catalyzes the synthesis of the hydroxymethylpyrimidine phosphate (HMP-P) moiety of thiamine from aminoimidazole ribotide (AIR) in a radical S-adenosyl-L-methionine (SAM)-dependent reaction. This Thermoanaerobacter pseudethanolicus (strain ATCC 33223 / 39E) (Clostridium thermohydrosulfuricum) protein is Phosphomethylpyrimidine synthase.